The sequence spans 120 residues: Large ribosomal subunit protein uL18 (120 aa).

The protein belongs to the universal ribosomal protein uL18 family. Part of the 50S ribosomal subunit; part of the 5S rRNA/L5/L18/L25 subcomplex. Contacts the 5S and 23S rRNAs.

Functionally, this is one of the proteins that bind and probably mediate the attachment of the 5S RNA into the large ribosomal subunit, where it forms part of the central protuberance. The polypeptide is Large ribosomal subunit protein uL18 (Bradyrhizobium sp. (strain ORS 278)).